A 493-amino-acid polypeptide reads, in one-letter code: Farnesoate epoxidase (493 aa).

Positions 1–24 are cleaved as a signal peptide; sequence MLALIVLCFILFFYIISRRHRGLC. Cys-433 is a heme binding site.

Belongs to the cytochrome P450 family. Requires heme as cofactor. In terms of tissue distribution, constitutively expressed in corpora allata from the first instar larval to adult stages.

It catalyses the reaction (2E,6E)-farnesoate + reduced [NADPH--hemoprotein reductase] + O2 = juvenile hormone III carboxylate + oxidized [NADPH--hemoprotein reductase] + H2O + H(+). In terms of biological role, catalyzes the conversion of farnesoate to juvenile hormone III acid in juvenile hormone biosynthesis. The sequence is that of Farnesoate epoxidase from Bombyx mori (Silk moth).